Reading from the N-terminus, the 115-residue chain is Virulence-associated protein A' (115 aa).

One can recognise an HTH cro/C1-type domain in the interval 16–70 (IKSDLDGLGINITEAAKALDVTRAALSEIINGKRGISAKMAWKLSKAFTNSDPEF). The segment at residues 27-46 (ITEAAKALDVTRAALSEIIN) is a DNA-binding region (H-T-H motif).

This sequence belongs to the VapA/VapI family.

The polypeptide is Virulence-associated protein A' (vapA') (Dichelobacter nodosus (Bacteroides nodosus)).